We begin with the raw amino-acid sequence, 111 residues long: Large ribosomal subunit protein uL22 (111 aa).

Belongs to the universal ribosomal protein uL22 family. As to quaternary structure, part of the 50S ribosomal subunit.

In terms of biological role, this protein binds specifically to 23S rRNA; its binding is stimulated by other ribosomal proteins, e.g. L4, L17, and L20. It is important during the early stages of 50S assembly. It makes multiple contacts with different domains of the 23S rRNA in the assembled 50S subunit and ribosome. Its function is as follows. The globular domain of the protein is located near the polypeptide exit tunnel on the outside of the subunit, while an extended beta-hairpin is found that lines the wall of the exit tunnel in the center of the 70S ribosome. The protein is Large ribosomal subunit protein uL22 of Polynucleobacter necessarius subsp. necessarius (strain STIR1).